Here is a 192-residue protein sequence, read N- to C-terminus: ER membrane protein complex subunit 8/9 homolog (192 aa).

The MPN domain maps to 5 to 135 (ISITTEALSK…LVSIDKVGSD (131 aa)).

The protein belongs to the EMC8/EMC9 family.

In Dictyostelium discoideum (Social amoeba), this protein is ER membrane protein complex subunit 8/9 homolog.